The chain runs to 1076 residues: DNA-directed RNA polymerase subunit beta (1076 aa).

It belongs to the RNA polymerase beta chain family. As to quaternary structure, in plastids the minimal PEP RNA polymerase catalytic core is composed of four subunits: alpha, beta, beta', and beta''. When a (nuclear-encoded) sigma factor is associated with the core the holoenzyme is formed, which can initiate transcription.

It localises to the plastid. The protein localises to the chloroplast. The enzyme catalyses RNA(n) + a ribonucleoside 5'-triphosphate = RNA(n+1) + diphosphate. Its function is as follows. DNA-dependent RNA polymerase catalyzes the transcription of DNA into RNA using the four ribonucleoside triphosphates as substrates. This is DNA-directed RNA polymerase subunit beta from Agrostis stolonifera (Creeping bentgrass).